Reading from the N-terminus, the 940-residue chain is Phosphoenolpyruvate carboxylase (940 aa).

Catalysis depends on residues H138 and K603.

The protein belongs to the PEPCase type 1 family. Mg(2+) serves as cofactor.

It carries out the reaction oxaloacetate + phosphate = phosphoenolpyruvate + hydrogencarbonate. Functionally, forms oxaloacetate, a four-carbon dicarboxylic acid source for the tricarboxylic acid cycle. The chain is Phosphoenolpyruvate carboxylase from Streptococcus thermophilus (strain CNRZ 1066).